Reading from the N-terminus, the 412-residue chain is Divalent metal cation transporter MntH (412 aa).

Helical transmembrane passes span leucine 19–alanine 39, alanine 46–isoleucine 66, tryptophan 98–isoleucine 118, leucine 122–isoleucine 142, methionine 155–serine 175, alanine 196–histidine 216, isoleucine 241–phenylalanine 261, alanine 286–glycine 306, valine 348–leucine 368, and leucine 392–isoleucine 412.

This sequence belongs to the NRAMP family.

The protein localises to the cell inner membrane. Functionally, h(+)-stimulated, divalent metal cation uptake system. The sequence is that of Divalent metal cation transporter MntH from Pectobacterium carotovorum subsp. carotovorum (strain PC1).